The primary structure comprises 177 residues: 2-C-methyl-D-erythritol 2,4-cyclodiphosphate synthase (177 aa).

Positions 8 and 10 each coordinate a divalent metal cation. 4-CDP-2-C-methyl-D-erythritol 2-phosphate-binding positions include 8 to 10 (DVH) and 34 to 35 (HS). An a divalent metal cation-binding site is contributed by H42. 4-CDP-2-C-methyl-D-erythritol 2-phosphate contacts are provided by residues 56-58 (DIG), 61-65 (FPDTD), 132-135 (TTEE), F139, and R142.

The protein belongs to the IspF family. As to quaternary structure, homotrimer. Requires a divalent metal cation as cofactor.

The catalysed reaction is 4-CDP-2-C-methyl-D-erythritol 2-phosphate = 2-C-methyl-D-erythritol 2,4-cyclic diphosphate + CMP. The protein operates within isoprenoid biosynthesis; isopentenyl diphosphate biosynthesis via DXP pathway; isopentenyl diphosphate from 1-deoxy-D-xylulose 5-phosphate: step 4/6. In terms of biological role, involved in the biosynthesis of isopentenyl diphosphate (IPP) and dimethylallyl diphosphate (DMAPP), two major building blocks of isoprenoid compounds. Catalyzes the conversion of 4-diphosphocytidyl-2-C-methyl-D-erythritol 2-phosphate (CDP-ME2P) to 2-C-methyl-D-erythritol 2,4-cyclodiphosphate (ME-CPP) with a corresponding release of cytidine 5-monophosphate (CMP). The protein is 2-C-methyl-D-erythritol 2,4-cyclodiphosphate synthase of Agathobacter rectalis (strain ATCC 33656 / DSM 3377 / JCM 17463 / KCTC 5835 / VPI 0990) (Eubacterium rectale).